The sequence spans 348 residues: Erlin-1 (348 aa).

At 1 to 7 the chain is on the cytoplasmic side; that stretch reads MNMTQAR. The chain crosses the membrane as a helical span at residues 8-28; that stretch reads VLVAAVVGLVAVLLYASIHKI. Residues 29–348 lie on the Lumenal side of the membrane; the sequence is EEGHLAVYYR…NVIQNKESTG (320 aa). An N-linked (GlcNAc...) asparagine glycan is attached at asparagine 108. Lysine 269 is subject to N6-acetyllysine. The disordered stretch occupies residues 325 to 348; it reads SSLPSKEALEPSGENVIQNKESTG. Over residues 339–348 the composition is skewed to polar residues; that stretch reads NVIQNKESTG.

This sequence belongs to the band 7/mec-2 family. As to quaternary structure, forms a heteromeric complex with ERLIN2. In complex with ERLIN2, interacts with RNF170. Interacts with AMFR and SYVN1. In terms of processing, deubiquitinated by USP25; leading to stabilization. Expressed in heart, placenta, liver, kidney, pancreas, prostate, testis, ovary and small intestine.

It localises to the endoplasmic reticulum membrane. Component of the ERLIN1/ERLIN2 complex which mediates the endoplasmic reticulum-associated degradation (ERAD) of inositol 1,4,5-trisphosphate receptors (IP3Rs). Involved in regulation of cellular cholesterol homeostasis by regulation the SREBP signaling pathway. Binds cholesterol and may promote ER retention of the SCAP-SREBF complex. Its function is as follows. (Microbial infection) Required early in hepatitis C virus (HCV) infection to initiate RNA replication, and later in the infection to support infectious virus production. This Homo sapiens (Human) protein is Erlin-1.